A 46-amino-acid polypeptide reads, in one-letter code: Mu-segestritoxin-Sf1c (46 aa).

Cystine bridges form between cysteine 3/cysteine 19, cysteine 10/cysteine 22, cysteine 18/cysteine 42, and cysteine 24/cysteine 40. Residues 31 to 33 are keys region for toxin activity; the sequence is RPW.

This sequence belongs to the neurotoxin 16 (SFI) family. In terms of tissue distribution, expressed by the venom gland.

It is found in the secreted. Its function is as follows. Insecticidal toxin. It inhibits insect voltage-gated sodium channels (Nav) by partially blocking the channel pore in DUM neurons from the American cockroach, not by acting as a gating modifier. The inhibition is only partially reversible after prolonged washout. In vivo, the toxin causes flaccid paralysis followed by death when injected into Heliothis virescens larvae. It also causes uncoordinated movements followed by full paralysis to sheep blowflies (Lucilia cuprina). When the toxin is fused to snowdrop lectin, it is orally active against larvae of the tomato moth (Laconobia oleracea), the rice brown planthopper (Nilaparvata lugens), and the peach-potato aphid (Myzus persicae). This chain is Mu-segestritoxin-Sf1c, found in Segestria florentina (Tube-web spider).